The sequence spans 363 residues: Probable endopolygalacturonase A (363 aa).

The signal sequence occupies residues M1–A20. Positions A21–R28 are excised as a propeptide. C31 and C46 are joined by a disulfide. 6 PbH1 repeats span residues S158–S187, S188–S209, G210–S230, V239–T260, V268–Q290, and T302–G347. N-linked (GlcNAc...) asparagine glycosylation occurs at N162. The active-site Proton donor is D202. C204 and C220 are disulfide-bonded. Residue H224 is part of the active site. 2 disulfide bridges follow: C330-C335 and C354-C363.

It belongs to the glycosyl hydrolase 28 family.

It is found in the secreted. The catalysed reaction is (1,4-alpha-D-galacturonosyl)n+m + H2O = (1,4-alpha-D-galacturonosyl)n + (1,4-alpha-D-galacturonosyl)m.. Involved in maceration and soft-rotting of plant tissue. Hydrolyzes the 1,4-alpha glycosidic bonds of de-esterified pectate in the smooth region of the plant cell wall. This chain is Probable endopolygalacturonase A (pgaA), found in Aspergillus parasiticus.